The primary structure comprises 229 residues: ATP synthase subunit a (229 aa).

6 helical membrane-spanning segments follow: residues 25–45 (ADAI…SMLA), 82–102 (FFPL…IGLV), 104–124 (GFFP…IVFV), 142–162 (FLGP…IGHF), 181–201 (LVLM…MMLM), and 202–222 (GVLV…IYIQ).

It belongs to the ATPase A chain family. As to quaternary structure, F-type ATPases have 2 components, CF(1) - the catalytic core - and CF(0) - the membrane proton channel. CF(1) has five subunits: alpha(3), beta(3), gamma(1), delta(1), epsilon(1). CF(0) has three main subunits: a(1), b(2) and c(9-12). The alpha and beta chains form an alternating ring which encloses part of the gamma chain. CF(1) is attached to CF(0) by a central stalk formed by the gamma and epsilon chains, while a peripheral stalk is formed by the delta and b chains.

The protein resides in the cell inner membrane. Its function is as follows. Key component of the proton channel; it plays a direct role in the translocation of protons across the membrane. This is ATP synthase subunit a from Geotalea uraniireducens (strain Rf4) (Geobacter uraniireducens).